The chain runs to 1018 residues: MSKDGNLNTSEFDPLANKEYTEEQKQTLEQEQKEFLSQTTTPELEADDGFIVTSASSAQSTPSTSALSGNISPDSQTSDPITKAVRETIIQPQKDNLIEQILKDLAALTDHDLAEQKRKEIEEEKDKDKTLSTFFGNPANREFIDKALENPELKKKLESIEIAGYKNVHNTFSAASGYPGGFKPVQWENHVSASDLRATVVKNDAGDELCTLNETTVKTKPFTLAKQDGTQVQISSYREIDFPIKLDKADGSMHLSMVALKADGTKPSKDKAVYFTAHYEEGPNGKPQLKEISSPKPLKFAGTGDDAIAYIEHGGEIYTLAVTRGKYKEMMKEVELNQGQSVDLSQAEDIIIGQGQSKEQPLITPQQTTSSSVEPPQYKQQVPPITPTNQPLQPETSQMPQSQQVNPNLLNAATALSGSMQDLLNYVNAGLTKEIDLIKEAATAILNDKKSDIAEKQANIIALAENTVNNKNLTPDAKVAGVNAVLETIKNDQNTPDLEKSKMLEATVAIALNSENLEPKQKQQILEKAVDVGLSLKDDASRAAAIDGITDAVIKSNLSTEDKGTMFIAVGDKVNVSELSNAEKQKLLGSVLKKGVEAQVLSPAQQQLMQQNLDKITAEQTKKDTIKKVNDILFDPLSNTELKTTNIQAIISNVLDGPATAEVKGEIIQEITNTVAGSSLEAHDKAAIIKGISETIATHSDTSLSLPNKALIMASAEKGIAESQANLPDRELMTKGLVDGIYEGKGGPEITKAVSSGIDNSNINDSEKEALKKAKDAASEAALDRETQNLTEGLKGQNIEEHKPHDDIYNKVREVINAVNPVIEALEKSKEPVVSAEERIVQETSSILNNISKLAVEKVNNFRAMLSPNGNLKTLEEKKEESIKKVDELVKAFGTKSSTEEQQSFIKANLIDDKTLSKEIRLQTIDKLLQEQKRAEAIENPSVKTEDVRVVSGKSKLKPISKDKPDIEKAKMVVGRDRVNIKGNIKIMRALMNARDSIQSENLNKSTPIKRESSPPQR.

Polar residues predominate over residues 1 to 11 (MSKDGNLNTSE). 3 disordered regions span residues 1–82 (MSKD…DPIT), 355–402 (GQSK…MPQS), and 995–1018 (RDSIQSENLNKSTPIKRESSPPQR). Residues 19–34 (EYTEEQKQTLEQEQKE) are compositionally biased toward basic and acidic residues. Residues 53–68 (TSASSAQSTPSTSALS) are compositionally biased toward low complexity. 4 stretches are compositionally biased toward polar residues: residues 69–80 (GNISPDSQTSDP), 355–380 (GQSKEQPLITPQQTTSSSVEPPQYKQ), 387–402 (PTNQPLQPETSQMPQS), and 996–1007 (DSIQSENLNKST). Residues 1009–1018 (IKRESSPPQR) are compositionally biased toward basic and acidic residues.

It localises to the cytoplasm. The polypeptide is Antigenic heat-stable 120 kDa protein (sca4) (Rickettsia japonica (strain ATCC VR-1363 / YH)).